The following is a 363-amino-acid chain: 3-dehydroquinate synthase (363 aa).

NAD(+) contacts are provided by residues 71–76 (DGEQYK), 105–109 (GVIGD), 129–130 (TT), Lys-142, Lys-151, and 169–172 (CLKT). The Zn(2+) site is built by Glu-184, His-247, and His-264.

The protein belongs to the sugar phosphate cyclases superfamily. Dehydroquinate synthase family. NAD(+) is required as a cofactor. Co(2+) serves as cofactor. It depends on Zn(2+) as a cofactor.

Its subcellular location is the cytoplasm. It carries out the reaction 7-phospho-2-dehydro-3-deoxy-D-arabino-heptonate = 3-dehydroquinate + phosphate. The protein operates within metabolic intermediate biosynthesis; chorismate biosynthesis; chorismate from D-erythrose 4-phosphate and phosphoenolpyruvate: step 2/7. Catalyzes the conversion of 3-deoxy-D-arabino-heptulosonate 7-phosphate (DAHP) to dehydroquinate (DHQ). This Vibrio vulnificus (strain CMCP6) protein is 3-dehydroquinate synthase.